A 305-amino-acid chain; its full sequence is Translation initiation factor eIF2B subunit alpha (305 aa).

K35 carries the N6-acetyllysine modification.

This sequence belongs to the eIF-2B alpha/beta/delta subunits family. As to quaternary structure, component of the translation initiation factor 2B (eIF2B) complex which is a heterodecamer of two sets of five different subunits: alpha, beta, gamma, delta and epsilon. Subunits alpha, beta and delta comprise a regulatory subcomplex and subunits epsilon and gamma comprise a catalytic subcomplex. Within the complex, the hexameric regulatory complex resides at the center, with the two heterodimeric catalytic subcomplexes bound on opposite sides.

The protein resides in the cytoplasm. It is found in the cytosol. Activated by the chemical integrated stress response (ISR) inhibitor ISRIB which stimulates guanine nucleotide exchange factor activity for both phosphorylated and unphosphorylated eIF2. Acts as a component of the translation initiation factor 2B (eIF2B) complex, which catalyzes the exchange of GDP for GTP on eukaryotic initiation factor 2 (eIF2) gamma subunit. Its guanine nucleotide exchange factor activity is repressed when bound to eIF2 complex phosphorylated on the alpha subunit, thereby limiting the amount of methionyl-initiator methionine tRNA available to the ribosome and consequently global translation is repressed. The polypeptide is Translation initiation factor eIF2B subunit alpha (Eif2b1) (Mus musculus (Mouse)).